The sequence spans 217 residues: Proteasome subunit beta type-6-A like protein (217 aa).

Residues 1-16 (MERHLMDSQIKGVSTG) constitute a propeptide, removed in mature form. Thr-17 functions as the Nucleophile in the catalytic mechanism.

The protein belongs to the peptidase T1B family. In terms of assembly, the 26S proteasome consists of a 20S proteasome core and two 19S regulatory subunits. The 20S proteasome core is composed of 28 subunits that are arranged in four stacked rings, resulting in a barrel-shaped structure. The two end rings are each formed by seven alpha subunits, and the two central rings are each formed by seven beta subunits. The catalytic chamber with the active sites is on the inside of the barrel.

The protein resides in the cytoplasm. It localises to the nucleus. The enzyme catalyses Cleavage of peptide bonds with very broad specificity.. Functionally, the proteasome is a multicatalytic proteinase complex which is characterized by its ability to cleave peptides with Arg, Phe, Tyr, Leu, and Glu adjacent to the leaving group at neutral or slightly basic pH. The proteasome has an ATP-dependent proteolytic activity. This subunit is involved in antigen processing to generate class I binding peptides. The chain is Proteasome subunit beta type-6-A like protein (psmb6l-a) from Salmo salar (Atlantic salmon).